The primary structure comprises 119 residues: MSDYRVTLEAGWTVKDVESVQDAIGIAVSEAGKRLHPSAKFVDVDVMNMPCPYCGKEINTALVIARTGLVGLLLSMKVFKAENPEHAVHIAKSVIGRALRDVSLSTYSVELIEGDEIAE.

It belongs to the UPF0212 family.

The chain is UPF0212 protein Mlab_0931 from Methanocorpusculum labreanum (strain ATCC 43576 / DSM 4855 / Z).